The primary structure comprises 918 residues: von Willebrand factor A domain-containing protein DDB_G0292016 (918 aa).

A VIT domain is found at 44 to 172 (KRCGLYSLKN…NVKVRVVISS (129 aa)). The 169-residue stretch at 299-467 (EFIFLIDCSG…NMEKQVMKLL (169 aa)) folds into the VWFA domain. The tract at residues 625–814 (VDIMNQSPPI…PSAPSQQKSV (190 aa)) is disordered. Positions 650–690 (ASGALSSSILSRKRSSSPSTATKRSSSSSFSSSYLSLSSSS) are enriched in low complexity. Acidic residues predominate over residues 716–746 (YESDGGDQSSEQDEEEEDDCDDFHEDLDEDL). The span at 752-774 (DVDKKECEKECKKKDSSKVDLKV) shows a compositional bias: basic and acidic residues. The segment covering 777–814 (SKVPLPSRSPSVSKPTTTSLLSPSPKSAPSAPSQQKSV) has biased composition (low complexity).

This Dictyostelium discoideum (Social amoeba) protein is von Willebrand factor A domain-containing protein DDB_G0292016.